A 96-amino-acid chain; its full sequence is Large ribosomal subunit protein uL23 (96 aa).

The protein belongs to the universal ribosomal protein uL23 family. As to quaternary structure, part of the 50S ribosomal subunit. Contacts protein L29, and trigger factor when it is bound to the ribosome.

Its function is as follows. One of the early assembly proteins it binds 23S rRNA. One of the proteins that surrounds the polypeptide exit tunnel on the outside of the ribosome. Forms the main docking site for trigger factor binding to the ribosome. The polypeptide is Large ribosomal subunit protein uL23 (Bacillus cereus (strain ATCC 10987 / NRS 248)).